Consider the following 448-residue polypeptide: MGKYFGTDGVRGVANSELTPELAFKLGRFGGYVLAHNGTEKPTVVVGRDTRISGVMLESALVAGLLSTGAEVMRLGVITTPGVAYLTREMNAQAGVMISASHNPVQDNGIKFFGADGFKLSDAQEAEIEALLDAEEDTLPRPVGVELGHTSDYFEGGHRYLSYLKSTIEGDLEGLKIALDGAHGSTYSLAPYLFGDLEADTVTIGCNPDGNNINDGVGSTHPEKLAELVLDTDSDFGLAFDGDGDRLIAVDEQGQIVDGDQIMFILAQDMDARGELKDHMVVSTVMSNLGFYKGLESLNIKSDKTKVGDRYVVEEMRRSSYNLGGEQSGHIVMMDHNTTGDGLLTGIHLASIVKRSGKTLSELAGQMTKYPQRLVNIKVSDKHAVEQNEHVAAVIKEVEDEMNGEGRVLVRPSGTEPLVRVMVEAKTDEDAERFVNKISDVVRAHMGL.

Ser-101 acts as the Phosphoserine intermediate in catalysis. Mg(2+) is bound by residues Ser-101, Asp-241, Asp-243, and Asp-245. The residue at position 101 (Ser-101) is a Phosphoserine.

Belongs to the phosphohexose mutase family. Requires Mg(2+) as cofactor. In terms of processing, activated by phosphorylation.

The enzyme catalyses alpha-D-glucosamine 1-phosphate = D-glucosamine 6-phosphate. Catalyzes the conversion of glucosamine-6-phosphate to glucosamine-1-phosphate. The protein is Phosphoglucosamine mutase of Macrococcus caseolyticus (strain JCSC5402) (Macrococcoides caseolyticum).